The chain runs to 137 residues: Large-conductance mechanosensitive channel (137 aa).

2 consecutive transmembrane segments (helical) span residues 9 to 29 and 79 to 99; these read AFAV…GAAF and IQTI…VKAI.

This sequence belongs to the MscL family. In terms of assembly, homopentamer.

The protein localises to the cell inner membrane. Functionally, channel that opens in response to stretch forces in the membrane lipid bilayer. May participate in the regulation of osmotic pressure changes within the cell. The polypeptide is Large-conductance mechanosensitive channel (Pseudomonas aeruginosa (strain UCBPP-PA14)).